The following is a 473-amino-acid chain: Ribonuclease Y (473 aa).

Residues 4 to 24 (LIAFIILLILFVLLITIVPVV) form a helical membrane-spanning segment. The 61-residue stretch at 158–218 (SLFNIDIIDE…IRREIARIVM (61 aa)) folds into the KH domain. Residues 285-378 (ILSHSLEVAE…VKIVDTLSAA (94 aa)) form the HD domain.

Belongs to the RNase Y family.

The protein resides in the cell membrane. Functionally, endoribonuclease that initiates mRNA decay. This chain is Ribonuclease Y, found in Ureaplasma parvum serovar 3 (strain ATCC 27815 / 27 / NCTC 11736).